The following is a 637-amino-acid chain: MAAMAVGGAGGSRVSSGRDLNCVPEIADTLGAVAKQGFDFLCMPVFHPRFKREFIQEPAKNRPGPQTRSDLLLSGRDWNTLIVGKLSPWIHPDSKVEKIRRNSEAAMLQELNFGAYLGLPAFLLPLNQEDNTNLARVLTNHIHTGHHSSMFWMRVPLVAPEDLRDDVIANAPTTHTEEYSGEEKTWMWWHNFRTLCDYSKRIAVALEIGADLPSNHVIDRWLGEPIKAAILPTSIFLTNKKGFPVLSKVQQRLIFRLLKLEVQFIITGTNHHSEKEFCSYLQYLEYLSQNRPPPNAYELFAKGYEDYLQSPLQPLMDNLESQTYEVFEKDPIKYSQYQQAIYKCLLDRVPEEEKETNVQVLMVLGAGRGPLVNASLRAAKQAERRIRLYAVEKNPNAVVTLENWQFEEWGSQVTVVSSDMREWVAPEKADIIVSELLGSFADNELSPECLDGAQHFLKDDGVSIPGEYTSFLAPISSSKLYNEVRACREKDRDPEAQFEMPYVVRLHNFHQLSAPKPCFTFSHPNRDPMIDNNRYCTLEFPVEVNTVLHGFAGYFETVLYRDITLSIRPETHSPGMFSWFPIFFPIKQPITVHEGQNICVRFWRCSNSKKVWYEWAVTAPVCSSIHNPTGRSYTIGL.

N-acetylalanine is present on Ala2. Residues 13 to 292 (RVSSGRDLNC…YLEYLSQNRP (280 aa)) form a TIM barrel region. The SAM-dependent MTase PRMT-type domain maps to 308–615 (LQSPLQPLMD…SNSKKVWYEW (308 aa)). Tyr324 is an S-adenosyl-L-methionine binding site. A protein is bound at residue Phe327. S-adenosyl-L-methionine contacts are provided by residues 333-334 (KY), Glu392, and 419-420 (DM). A protein-binding residues include Glu435 and Glu444. Catalysis depends on proton donor/acceptor residues Glu435 and Glu444. A beta barrel region spans residues 465 to 637 (PGEYTSFLAP…PTGRSYTIGL (173 aa)). Residues 488-494 (REKDRDP) are dimerization.

This sequence belongs to the class I-like SAM-binding methyltransferase superfamily. Protein arginine N-methyltransferase family. As to quaternary structure, forms, at least, homodimers and homotetramers. Component of the methylosome complex, composed of PRMT5, WDR77 and CLNS1A. Found in a complex composed of PRMT5, WDR77 and RIOK1. RIOK1 and CLNS1A associate with PRMT5 in a mutually exclusive fashion, which allows the recruitment of distinct methylation substrates, such as nucleolin/NCL and Sm proteins, respectively. Interacts with PRDM1. Identified in a complex composed of methylosome and PRMT1 and ERH. Interacts with EGFR; methylates EGFR and stimulates EGFR-mediated ERK activation. Interacts with HOXA9. Interacts with SRGAP2. Found in a complex with COPRS, RUNX1 and CBFB. Interacts with CHTOP; the interaction symmetrically methylates CHTOP, but seems to require the presence of PRMT1. Interacts with EPB41L3; this modulates methylation of target proteins. Component of a high molecular weight E2F-pocket protein complex, CERC (cyclin E1 repressor complex). Associates with SWI/SNF remodeling complexes containing SMARCA2 and SMARCA4. Interacts with JAK2, SSTR1, SUPT5H, BRAF and with active RAF1. Interacts with LSM11, PRMT7 and SNRPD3. Interacts with COPRS; promoting its recruitment on histone H4. Interacts with CLNS1A/pICln. Identified in a complex with CLNS1A/pICln and Sm proteins. Interacts with RPS10. Interacts with WDR77. Interacts with IWS1. Interacts with CRY1. Interacts with POLR2A. Interacts with SMN1/SMN2. Interacts with LYAR; this interaction is direct. Interacts with TTC5/STRAP; this interaction is DNA damage-dependent and promotes PRMT5 interaction with p53/TP53. Interacts with p53/TP53 in response to DNA damage; the interaction is TTC5/STRAP dependent. Interacts with FAM47E; the interaction is direct, promotes PRMT5 localization to chromatin, and does not disrupt its association with WDR77 or STUB1. Interacts with TDRD6. Interacts with STUB1. Interacts with MBD2. Does not interact with MBD3.

It is found in the cytoplasm. The protein localises to the nucleus. The protein resides in the golgi apparatus. It carries out the reaction L-arginyl-[protein] + 2 S-adenosyl-L-methionine = N(omega),N(omega)'-dimethyl-L-arginyl-[protein] + 2 S-adenosyl-L-homocysteine + 2 H(+). Activity is increased by EGF, HGF, FGF1 or FGF2 treatments, and slightly decreased by NGF treatment. In terms of biological role, arginine methyltransferase that can both catalyze the formation of omega-N monomethylarginine (MMA) and symmetrical dimethylarginine (sDMA), with a preference for the formation of MMA. Specifically mediates the symmetrical dimethylation of arginine residues in the small nuclear ribonucleoproteins Sm D1 (SNRPD1) and Sm D3 (SNRPD3); such methylation being required for the assembly and biogenesis of snRNP core particles. Methylates SUPT5H and may regulate its transcriptional elongation properties. May methylate the N-terminal region of MBD2. Mono- and dimethylates arginine residues of myelin basic protein (MBP) in vitro. May play a role in cytokine-activated transduction pathways. Negatively regulates cyclin E1 promoter activity and cellular proliferation. Methylates histone H2A and H4 'Arg-3' during germ cell development. Methylates histone H3 'Arg-8', which may repress transcription. Methylates the Piwi proteins (PIWIL1, PIWIL2 and PIWIL4), methylation of Piwi proteins being required for the interaction with Tudor domain-containing proteins and subsequent localization to the meiotic nuage. Methylates RPS10. Attenuates EGF signaling through the MAPK1/MAPK3 pathway acting at 2 levels. First, monomethylates EGFR; this enhances EGFR 'Tyr-1197' phosphorylation and PTPN6 recruitment, eventually leading to reduced SOS1 phosphorylation. Second, methylates RAF1 and probably BRAF, hence destabilizing these 2 signaling proteins and reducing their catalytic activity. Required for induction of E-selectin and VCAM-1, on the endothelial cells surface at sites of inflammation. Methylates HOXA9. Methylates and regulates SRGAP2 which is involved in cell migration and differentiation. Acts as a transcriptional corepressor in CRY1-mediated repression of the core circadian component PER1 by regulating the H4R3 dimethylation at the PER1 promoter. Methylates GM130/GOLGA2, regulating Golgi ribbon formation. Methylates H4R3 in genes involved in glioblastomagenesis in a CHTOP- and/or TET1-dependent manner. Symmetrically methylates POLR2A, a modification that allows the recruitment to POLR2A of proteins including SMN1/SMN2 and SETX. This is required for resolving RNA-DNA hybrids created by RNA polymerase II, that form R-loop in transcription terminal regions, an important step in proper transcription termination. Along with LYAR, binds the promoter of gamma-globin HBG1/HBG2 and represses its expression. Symmetrically methylates NCL. Methylates p53/TP53; methylation might possibly affect p53/TP53 target gene specificity. Involved in spliceosome maturation and mRNA splicing in prophase I spermatocytes through the catalysis of the symmetrical arginine dimethylation of SNRPB (small nuclear ribonucleoprotein-associated protein) and the interaction with tudor domain-containing protein TDRD6. In Mus musculus (Mouse), this protein is Protein arginine N-methyltransferase 5 (Prmt5).